The primary structure comprises 585 residues: Formate--tetrahydrofolate ligase (585 aa).

An ATP-binding site is contributed by T74–T81.

The protein belongs to the formate--tetrahydrofolate ligase family.

The enzyme catalyses (6S)-5,6,7,8-tetrahydrofolate + formate + ATP = (6R)-10-formyltetrahydrofolate + ADP + phosphate. Its pathway is one-carbon metabolism; tetrahydrofolate interconversion. In Yersinia enterocolitica serotype O:8 / biotype 1B (strain NCTC 13174 / 8081), this protein is Formate--tetrahydrofolate ligase.